The following is a 300-amino-acid chain: MAPPVTERWCLALILLFLSLFVQSSTAIYCGAEDCYALLGVAQDANASDIKRSYYKLSLQHHPDKNPDPESRKLFVKIATAYEILKDNTTRAQYDYAIEHPEEVFYNTAQYYRAKYGHKSDPRAVLVGLLVVLSAFQYLNNVARYNEAIATVKRTPAYKNKLKALELERTGGVSNKKKGSKQIDQKLQEELSNELDLQIKGAEKPSVWELLGVRFILLPYTIIKLLVWYSSWVWRYKVKKAPYSWEDASYLTRRSLSVPADAWANLDEYRKEDLVQKRLWEKQNLENYFAEMRKESKRRR.

The N-terminal stretch at 1 to 27 (MAPPVTERWCLALILLFLSLFVQSSTA) is a signal peptide. Residues 28–122 (IYCGAEDCYA…RAKYGHKSDP (95 aa)) are Lumenal-facing. Positions 34-98 (DCYALLGVAQ…TTRAQYDYAI (65 aa)) constitute a J domain. 2 N-linked (GlcNAc...) asparagine glycosylation sites follow: asparagine 46 and asparagine 88. Residues 123-143 (RAVLVGLLVVLSAFQYLNNVA) traverse the membrane as a helical segment. The Cytoplasmic portion of the chain corresponds to 144–206 (RYNEAIATVK…LQIKGAEKPS (63 aa)). Residues 207–227 (VWELLGVRFILLPYTIIKLLV) traverse the membrane as a helical segment. The Lumenal segment spans residues 228–300 (WYSSWVWRYK…EMRKESKRRR (73 aa)).

In terms of tissue distribution, expressed in leaves, flower buds and flowers.

Its subcellular location is the endoplasmic reticulum membrane. In terms of biological role, may play a role in protein folding in the endoplasmic reticulum. The polypeptide is Chaperone protein dnaJ 50 (C50) (Arabidopsis thaliana (Mouse-ear cress)).